A 92-amino-acid chain; its full sequence is Co-chaperonin GroES (92 aa).

It belongs to the GroES chaperonin family. In terms of assembly, heptamer of 7 subunits arranged in a ring. Interacts with the chaperonin GroEL.

Its subcellular location is the cytoplasm. Together with the chaperonin GroEL, plays an essential role in assisting protein folding. The GroEL-GroES system forms a nano-cage that allows encapsulation of the non-native substrate proteins and provides a physical environment optimized to promote and accelerate protein folding. GroES binds to the apical surface of the GroEL ring, thereby capping the opening of the GroEL channel. This chain is Co-chaperonin GroES, found in Thermotoga maritima (strain ATCC 43589 / DSM 3109 / JCM 10099 / NBRC 100826 / MSB8).